The following is a 141-amino-acid chain: Nucleoside triphosphatase NudI (141 aa).

One can recognise a Nudix hydrolase domain in the interval 1-141 (MRQRTIVCPL…RKTLRLKGLL (141 aa)). Positions 38–59 (GGVEPGERIEEALRREIREELG) match the Nudix box motif.

Belongs to the Nudix hydrolase family. NudI subfamily. As to quaternary structure, monomer. The cofactor is Mg(2+).

It carries out the reaction a ribonucleoside 5'-triphosphate + H2O = a ribonucleoside 5'-phosphate + diphosphate + H(+). It catalyses the reaction a 2'-deoxyribonucleoside 5'-triphosphate + H2O = a 2'-deoxyribonucleoside 5'-phosphate + diphosphate + H(+). The enzyme catalyses dUTP + H2O = dUMP + diphosphate + H(+). The catalysed reaction is dTTP + H2O = dTMP + diphosphate + H(+). It carries out the reaction dCTP + H2O = dCMP + diphosphate + H(+). Catalyzes the hydrolysis of nucleoside triphosphates, with a preference for pyrimidine deoxynucleoside triphosphates (dUTP, dTTP and dCTP). The protein is Nucleoside triphosphatase NudI of Escherichia coli (strain ATCC 8739 / DSM 1576 / NBRC 3972 / NCIMB 8545 / WDCM 00012 / Crooks).